The primary structure comprises 173 residues: Large ribosomal subunit protein uL10 (173 aa).

It belongs to the universal ribosomal protein uL10 family. As to quaternary structure, part of the ribosomal stalk of the 50S ribosomal subunit. The N-terminus interacts with L11 and the large rRNA to form the base of the stalk. The C-terminus forms an elongated spine to which L12 dimers bind in a sequential fashion forming a multimeric L10(L12)X complex.

Forms part of the ribosomal stalk, playing a central role in the interaction of the ribosome with GTP-bound translation factors. This Chlorobaculum parvum (strain DSM 263 / NCIMB 8327) (Chlorobium vibrioforme subsp. thiosulfatophilum) protein is Large ribosomal subunit protein uL10.